The sequence spans 43 residues: MSDFVNAISEAVKAGLSADWVTMGTSIADALAKGADFILGFFN.

Met-1 is modified (N-formylmethionine).

Belongs to the staphylococcal hemolytic protein family.

Its subcellular location is the secreted. In terms of biological role, virulence factor. Causes hemolysis of erythrocytes from sheep (HD(50)=2.63 mM), rabbit (HD(50)=2.37 mM), guinea pig (HD(50)=1.98 mM), dog (HD(50)=1.02 mM) and human (HD(50)=2.07 mM). Acts synergistically with beta-hemolysins from S.aureus ATCC 25923. Cytotoxic towards human dermal fibroblasts. The polypeptide is Hemolysin H3C (Staphylococcus cohnii subsp. cohnii).